A 212-amino-acid polypeptide reads, in one-letter code: uncharacterized protein (212 aa).

It belongs to the flavoredoxin family. Requires FMN as cofactor.

This is an uncharacterized protein from Methanothermobacter thermautotrophicus (strain ATCC 29096 / DSM 1053 / JCM 10044 / NBRC 100330 / Delta H) (Methanobacterium thermoautotrophicum).